The following is a 130-amino-acid chain: Histone H2A.1 (130 aa).

Residues 1–22 (MSGGKGKAGSSEKASTSRSAKA) form a disordered region. S2 bears the N-acetylserine mark. K5 and K7 each carry N6-acetyllysine. Q105 bears the N5-methylglutamine mark. The residue at position 127 (S127) is a Phosphoserine. Residues 127 to 128 (SQ) carry the [ST]-Q motif motif.

It belongs to the histone H2A family. In terms of assembly, the nucleosome is a histone octamer containing two molecules each of H2A, H2B, H3 and H4 assembled in one H3-H4 heterotetramer and two H2A-H2B heterodimers. The octamer wraps approximately 147 bp of DNA. In terms of processing, phosphorylated to form H2AS128ph (gamma-H2A) in response to DNA double-strand breaks (DSBs) generated by exogenous genotoxic agents and by stalled replication forks. Phosphorylation is dependent on the DNA damage checkpoint kinases MEC1/ATR and TEL1/ATM, spreads on either side of a detected DSB site and may mark the surrounding chromatin for recruitment of proteins required for DNA damage signaling and repair. Gamma-H2A is removed from the DNA prior to the strand invasion-primer extension step of the repair process and subsequently dephosphorylated. Dephosphorylation is necessary for efficient recovery from the DNA damage checkpoint. Post-translationally, acetylated by ESA1 to form H2AK4ac and H2AK7ac.

It is found in the nucleus. Its subcellular location is the chromosome. Its function is as follows. Core component of nucleosome which plays a central role in DNA double strand break (DSB) repair. Nucleosomes wrap and compact DNA into chromatin, limiting DNA accessibility to the cellular machineries which require DNA as a template. Histones thereby play a central role in transcription regulation, DNA repair, DNA replication and chromosomal stability. DNA accessibility is regulated via a complex set of post-translational modifications of histones, also called histone code, and nucleosome remodeling. The chain is Histone H2A.1 (HTA1) from Lodderomyces elongisporus (strain ATCC 11503 / CBS 2605 / JCM 1781 / NBRC 1676 / NRRL YB-4239) (Yeast).